Here is a 357-residue protein sequence, read N- to C-terminus: uncharacterized protein (357 aa).

Residues 27–196 (LVCEGGGQRG…SDAIPVKEAA (170 aa)) enclose the PNPLA domain. The GXGXXG motif lies at 31–36 (GGGQRG). Residues 59–63 (GTSAG) carry the GXSXG motif. Ser-61 acts as the Nucleophile in catalysis. Asp-183 functions as the Proton acceptor in the catalytic mechanism. The DGA/G motif lies at 183–185 (DGG).

Probable lipid hydrolase. This is an uncharacterized protein from Escherichia coli (strain K12).